A 467-amino-acid chain; its full sequence is Sialic acid-binding Ig-like lectin 7 (467 aa).

An N-terminal signal peptide occupies residues 1 to 18; that stretch reads MLLLLLLPLLWGRERVEG. Residues 19-353 lie on the Extracellular side of the membrane; the sequence is QKSNRKDYSL…KMRPVSGVLL (335 aa). In terms of domain architecture, Ig-like V-type spans 39–122; it reads GMCVHVRCSF…ARMSDAGRYF (84 aa). A disulfide bond links C46 and C106. The N-linked (GlcNAc...) asparagine glycan is linked to N105. Residues R124 and 131–135 each bind N-acetylneuraminate; that span reads KWNYK. N-linked (GlcNAc...) asparagine glycosylation is found at N142 and N165. Residues 150 to 233 enclose the Ig-like C2-type 1 domain; it reads PNILIPGTLE…AGVTTNRTIQ (84 aa). A disulfide bridge links C168 with C217. N229, N235, N242, and N260 each carry an N-linked (GlcNAc...) asparagine glycan. One can recognise an Ig-like C2-type 2 domain in the interval 240 to 336; sequence PQNLTVTVFQ…GSQHVSLNLS (97 aa). A disulfide bond links C276 and C320. The N-linked (GlcNAc...) asparagine glycan is linked to N334. The helical transmembrane segment at 354-376 threads the bilayer; sequence GAVGGAGATALVFLSFCVIFIVV. Topologically, residues 377–467 are cytoplasmic; it reads RSCRKKSARP…NEYSEIKIPK (91 aa). The span at 401 to 412 shows a compositional bias: polar residues; that stretch reads IRGSASQGNLTE. The tract at residues 401 to 431 is disordered; the sequence is IRGSASQGNLTESWADDNPRHHGLAAHSSGE. S429 bears the Phosphoserine mark. The ITIM motif motif lies at 435–440; the sequence is IQYAPL. The interval 443–467 is disordered; sequence HKGEPQDLSGQEATNNEYSEIKIPK. Residues 450 to 460 are compositionally biased toward polar residues; the sequence is LSGQEATNNEY.

The protein belongs to the immunoglobulin superfamily. SIGLEC (sialic acid binding Ig-like lectin) family. In terms of assembly, interacts with PTPN6/SHP-1 upon phosphorylation. Tyrosine phosphorylated. As to expression, predominantly expressed by resting and activated natural killer cells and at lower levels by granulocytes and monocytes. High expression found in placenta, liver, lung, spleen, and peripheral blood leukocytes.

The protein resides in the membrane. Its function is as follows. Putative adhesion molecule that mediates sialic-acid dependent binding to cells. Preferentially binds to alpha-2,3- and alpha-2,6-linked sialic acid. Also binds disialogangliosides (disialogalactosyl globoside, disialyl lactotetraosylceramide and disialyl GalNAc lactotetraoslylceramide). The sialic acid recognition site may be masked by cis interactions with sialic acids on the same cell surface. In the immune response, may act as an inhibitory receptor upon ligand induced tyrosine phosphorylation by recruiting cytoplasmic phosphatase(s) via their SH2 domain(s) that block signal transduction through dephosphorylation of signaling molecules. Mediates inhibition of natural killer cells cytotoxicity. May play a role in hemopoiesis. Inhibits differentiation of CD34+ cell precursors towards myelomonocytic cell lineage and proliferation of leukemic myeloid cells (in vitro). In Homo sapiens (Human), this protein is Sialic acid-binding Ig-like lectin 7 (SIGLEC7).